We begin with the raw amino-acid sequence, 100 residues long: NADH-quinone oxidoreductase subunit K 2 (100 aa).

The next 3 membrane-spanning stretches (helical) occupy residues 4-24 (LNNY…GVLV), 29-49 (IVIF…FIAF), and 60-80 (IFVF…LALM).

Belongs to the complex I subunit 4L family. As to quaternary structure, NDH-1 is composed of 14 different subunits. Subunits NuoA, H, J, K, L, M, N constitute the membrane sector of the complex.

Its subcellular location is the cell inner membrane. It carries out the reaction a quinone + NADH + 5 H(+)(in) = a quinol + NAD(+) + 4 H(+)(out). Its function is as follows. NDH-1 shuttles electrons from NADH, via FMN and iron-sulfur (Fe-S) centers, to quinones in the respiratory chain. The immediate electron acceptor for the enzyme in this species is believed to be ubiquinone. Couples the redox reaction to proton translocation (for every two electrons transferred, four hydrogen ions are translocated across the cytoplasmic membrane), and thus conserves the redox energy in a proton gradient. This is NADH-quinone oxidoreductase subunit K 2 from Geotalea uraniireducens (strain Rf4) (Geobacter uraniireducens).